The following is a 391-amino-acid chain: Phosphoglycerate kinase (391 aa).

Residues 21–23 (DLN), arginine 36, 59–62 (HLGR), arginine 113, and arginine 146 each bind substrate. ATP contacts are provided by residues lysine 197, glutamate 319, and 345 to 348 (GGDT).

This sequence belongs to the phosphoglycerate kinase family. Monomer.

The protein resides in the cytoplasm. It carries out the reaction (2R)-3-phosphoglycerate + ATP = (2R)-3-phospho-glyceroyl phosphate + ADP. It participates in carbohydrate degradation; glycolysis; pyruvate from D-glyceraldehyde 3-phosphate: step 2/5. This Xylella fastidiosa (strain 9a5c) protein is Phosphoglycerate kinase.